The following is a 629-amino-acid chain: tRNA uridine 5-carboxymethylaminomethyl modification enzyme MnmG (629 aa).

Residues 13–18 (GGGHAG), Val-125, and Ser-180 each bind FAD. 273 to 287 (GPRYCPSIEDKVMRF) lines the NAD(+) pocket. FAD is bound at residue Gln-370.

The protein belongs to the MnmG family. Homodimer. Heterotetramer of two MnmE and two MnmG subunits. The cofactor is FAD.

Its subcellular location is the cytoplasm. Its function is as follows. NAD-binding protein involved in the addition of a carboxymethylaminomethyl (cmnm) group at the wobble position (U34) of certain tRNAs, forming tRNA-cmnm(5)s(2)U34. This is tRNA uridine 5-carboxymethylaminomethyl modification enzyme MnmG from Salmonella typhi.